Consider the following 88-residue polypeptide: Acyl-CoA-binding protein homolog (88 aa).

The 86-residue stretch at 3-88 (PQADFDKAAG…AHELIEKYGL (86 aa)) folds into the ACB domain. Residues K15, 30–34 (YGLYK), K52, K56, and Y75 contribute to the an acyl-CoA site.

The protein belongs to the ACBP family. Brain. Is selectively expressed in glial cells.

The protein localises to the endoplasmic reticulum. The protein resides in the golgi apparatus. Functionally, may play important functions in the control of brain and pituitary activities. May regulate GABA neurotransmission through a paracrine and/or autocrine mechanism. May not bind acyl-CoA esters. This is Acyl-CoA-binding protein homolog from Pelophylax ridibundus (Marsh frog).